A 489-amino-acid chain; its full sequence is Argininosuccinate lyase (489 aa).

A disordered region spans residues 1–20 (MSEPSAAVGQRPGGESAPAH).

This sequence belongs to the lyase 1 family. Argininosuccinate lyase subfamily.

The protein localises to the cytoplasm. It carries out the reaction 2-(N(omega)-L-arginino)succinate = fumarate + L-arginine. The protein operates within amino-acid biosynthesis; L-arginine biosynthesis; L-arginine from L-ornithine and carbamoyl phosphate: step 3/3. The sequence is that of Argininosuccinate lyase from Acidothermus cellulolyticus (strain ATCC 43068 / DSM 8971 / 11B).